The chain runs to 285 residues: Taffazin (285 aa).

Residues 1–23 (MDSNNSNNNNKNLKQICDIPKPQ) lie on the Mitochondrial intermembrane side of the membrane. Residues 24-42 (FLSKGVFTLVGVLCKFWIS) lie within the membrane without spanning it. Residues 43 to 285 (MNTVTTSGID…GRFSHPTIKD (243 aa)) are Mitochondrial intermembrane-facing. The HXXXXD motif motif lies at 74-79 (HSSNLD).

The protein belongs to the taffazin family.

The protein resides in the mitochondrion outer membrane. Its subcellular location is the mitochondrion inner membrane. The catalysed reaction is a 1-acyl-sn-glycero-3-phosphate + a 1,2-diacyl-sn-glycero-3-phospho-(1'-sn-glycerol) = 1-acyl-sn-glycero-3-phospho-(1'-sn-glycerol) + a 1,2-diacyl-sn-glycero-3-phosphate. It carries out the reaction 1-hexadecanoyl-2-(9Z,12Z-octadecadienoyl)-sn-glycero-3-phospho-(1'-sn-glycerol) + 1-(9Z-octadecenoyl)-sn-glycero-3-phosphate = 1-(9Z)-octadecenoyl-2-(9Z,12Z)-octadecadienoyl-sn-glycero-3-phosphate + 1-hexadecanoyl-sn-glycero-3-phospho-(1'-sn-glycerol). It catalyses the reaction 1'-[1,2-diacyl-sn-glycero-3-phospho],3'-[1-acyl-sn-glycero-3-phospho]-glycerol + a 1,2-diacyl-sn-glycero-3-phosphocholine = a cardiolipin + a 1-acyl-sn-glycero-3-phosphocholine. The enzyme catalyses 1-hexadecanoyl-2-(9Z,12Z-octadecadienoyl)-sn-glycero-3-phosphocholine + 1-hexadecanoyl-sn-glycero-3-phosphocholine = 2-(9Z,12Z-octadecadienoyl)-sn-glycero-3-phosphocholine + 1,2-dihexadecanoyl-sn-glycero-3-phosphocholine. The catalysed reaction is 1,2-di-(9Z-octadecenoyl)-sn-glycero-3-phosphocholine + 1-hexadecanoyl-sn-glycero-3-phosphocholine = 1-hexadecanoyl-2-(9Z-octadecenoyl)-sn-glycero-3-phosphocholine + 1-(9Z-octadecenoyl)-sn-glycero-3-phosphocholine. Its pathway is phospholipid metabolism. Functionally, acyltransferase required to remodel newly synthesized phospholipid cardiolipin (1',3'-bis-[1,2-diacyl-sn-glycero-3-phospho]-glycerol or CL), a key component of the mitochondrial inner membrane, with tissue specific acyl chains necessary for adequate mitochondrial function. Its role in cellular physiology is to improve mitochondrial performance. CL is critical for the coassembly of lipids and proteins in mitochondrial membranes, for instance, remodeling of the acyl groups of CL in the mitochondrial inner membrane affects the assembly and stability of respiratory chain complex IV and its supercomplex forms. Catalyzes the transacylation between phospholipids and lysophospholipids, with the highest rate being between phosphatidylcholine (1,2-diacyl-sn-glycero-3-phosphocholine or PC) and CL. Catalyzes both 1-acyl-sn-glycero-3-phosphocholine (lysophosphatidylcholine or LPC) reacylation and PC-CL transacylation, that means, it exchanges acyl groups between CL and PC by a combination of forward and reverse transacylations. Also catalyzes transacylations between other phospholipids such as phosphatidylethanolamine (1,2-diacyl-sn-glycero-3-phosphoethanolamine or PE) and CL, between PC and PE, and between PC and phosphatidate (1,2-diacyl-sn-glycero-3-phosphate or PA), although at lower rate. Not regiospecific, it transfers acyl groups into any of the sn-1 and sn-2 positions of the monolysocardiolipin (MLCL), which is an important prerequisite for uniformity and symmetry in CL acyl distribution. Cannot transacylate dilysocardiolipin (DLCL), thus, the role of MLCL is limited to that of an acyl acceptor. CoA-independent, it can reshuffle molecular species within a single phospholipid class. Redistributes fatty acids between MLCL, CL, and other lipids, which prolongs the half-life of CL. Its action is completely reversible, which allows for cyclic changes, such as fission and fusion or bending and flattening of the membrane. Hence, by contributing to the flexibility of the lipid composition, it plays an important role in the dynamics of mitochondria membranes. In Dictyostelium discoideum (Social amoeba), this protein is Taffazin (taz).